A 479-amino-acid chain; its full sequence is D-alanyl-D-alanine carboxypeptidase DacB (479 aa).

Residues 1–26 (MKKLSSISTALGSFLLSVSFSLPTFA) form the signal peptide. The Acyl-ester intermediate role is filled by S69. K72 serves as the catalytic Proton acceptor. The active site involves S310. K420 is a binding site for substrate.

The protein belongs to the peptidase S13 family.

The protein resides in the periplasm. The enzyme catalyses Preferential cleavage: (Ac)2-L-Lys-D-Ala-|-D-Ala. Also transpeptidation of peptidyl-alanyl moieties that are N-acyl substituents of D-alanine.. It functions in the pathway cell wall biogenesis; peptidoglycan biosynthesis. In terms of biological role, not involved in transpeptidation but exclusively catalyzes a DD-carboxypeptidase and DD-endopeptidase reaction. This chain is D-alanyl-D-alanine carboxypeptidase DacB (dacB), found in Haemophilus influenzae (strain ATCC 51907 / DSM 11121 / KW20 / Rd).